The primary structure comprises 145 residues: uncharacterized protein (145 aa).

This is an uncharacterized protein from Methanothrix soehngenii (Methanosaeta concilii).